The following is an 85-amino-acid chain: Probable dolichol-phosphate mannosyltransferase subunit 3 (85 aa).

The next 2 helical transmembrane spans lie at 13 to 33 (VLLVLVWLLAYTEVVPVLSYI) and 37 to 57 (AHCLVYYIYAAFNVIYGVATF).

This sequence belongs to the DPM3 family.

The protein resides in the endoplasmic reticulum membrane. Its pathway is protein modification; protein glycosylation. In terms of biological role, stabilizer subunit of the dolichol-phosphate-mannose synthase complex. The sequence is that of Probable dolichol-phosphate mannosyltransferase subunit 3 from Caenorhabditis briggsae.